Reading from the N-terminus, the 310-residue chain is Ribosomal RNA small subunit methyltransferase H (310 aa).

S-adenosyl-L-methionine is bound by residues 35-37, Asp52, Phe79, Asp100, and Gln107; that span reads GGH.

This sequence belongs to the methyltransferase superfamily. RsmH family.

The protein localises to the cytoplasm. The catalysed reaction is cytidine(1402) in 16S rRNA + S-adenosyl-L-methionine = N(4)-methylcytidine(1402) in 16S rRNA + S-adenosyl-L-homocysteine + H(+). Specifically methylates the N4 position of cytidine in position 1402 (C1402) of 16S rRNA. The polypeptide is Ribosomal RNA small subunit methyltransferase H (Anaeromyxobacter dehalogenans (strain 2CP-1 / ATCC BAA-258)).